The following is a 378-amino-acid chain: Actin-related protein 2/3 complex subunit 1A (378 aa).

7 WD repeats span residues 8–47 (RFAE…HWER), 53–92 (KHDQ…WVPT), 97–138 (RLNR…WVSK), 143–182 (RHES…VDTK), 203–242 (LSYS…PLAQ), 257–295 (ISEK…KAAS), and 331–375 (VHDN…QELG).

This sequence belongs to the WD repeat ARPC1 family. In terms of assembly, component of the Arp2/3 complex composed of ARP2, ARP3, ARPC1/p41-ARC, ARPC2/p34-ARC, ARPC3/p21-ARC, ARPC4/p20-ARC and ARPC5/p16-ARC. In terms of tissue distribution, expressed at low levels in all tissues with a relatively highest expression in inflorescences.

It localises to the cytoplasm. It is found in the cytoskeleton. Functions as a component of the Arp2/3 complex which is involved in regulation of actin polymerization and together with an activating nucleation-promoting factor (NPF) mediates the formation of branched actin networks. Arp2/3 complex plays a critical role in the control of cell morphogenesis via the modulation of cell polarity development. The polypeptide is Actin-related protein 2/3 complex subunit 1A (ARPC1A) (Arabidopsis thaliana (Mouse-ear cress)).